The following is a 908-amino-acid chain: Putative cell signaling protein HAM1 (908 aa).

2 disordered regions span residues 1-24 (MSVAATKSEISHNPGKMSVTSAVS) and 177-359 (TKAA…EHRQ). 5 stretches are compositionally biased toward basic and acidic residues: residues 179-192 (AADKSRPSQEKLDS), 231-247 (HPRDDPRDAQLVDDKGK), 261-283 (AKSDAQSKAQDLKSSARDYKETG), 306-321 (EQKEQVKGAAYDKRDA), and 338-359 (NQEKARGKAAALRDRIPEEHRQ). Residues 255–282 (YNQAQEAKSDAQSKAQDLKSSARDYKET) are a coiled coil.

In terms of processing, palmitoylated.

Its function is as follows. May act as a negative regulator of mating during vegetative growth. This Cryptococcus neoformans var. grubii serotype A (strain H99 / ATCC 208821 / CBS 10515 / FGSC 9487) (Filobasidiella neoformans var. grubii) protein is Putative cell signaling protein HAM1.